We begin with the raw amino-acid sequence, 345 residues long: L-Ala-D/L-Glu epimerase (345 aa).

The substrate site is built by Thr-134 and Lys-159. The Proton acceptor; specific for (R)-substrate epimerization role is filled by Lys-161. Asp-188 is a binding site for Mg(2+). Residue Asn-190 coordinates substrate. Glu-216 and Asp-241 together coordinate Mg(2+). Lys-265 (proton acceptor; specific for (S)-substrate epimerization) is an active-site residue. Residues Cys-292, Asp-317, and Asp-319 each coordinate substrate.

It belongs to the mandelate racemase/muconate lactonizing enzyme family. Requires Mg(2+) as cofactor.

The catalysed reaction is L-alanyl-L-glutamate = L-alanyl-D-glutamate. It participates in cell wall degradation; peptidoglycan degradation. In terms of biological role, catalyzes the epimerization of L-Ala-D-Glu to L-Ala-L-Glu and has probably a role in the metabolism of the murein peptide, of which L-Ala-D-Glu is a component. Is also able to catalyze the reverse reaction and the epimerization of a broad range of other dipeptides; is most efficient with L-Ala-D/L-Phe, L-Ala-D/L-Tyr, and L-Ala-D/L-His. The polypeptide is L-Ala-D/L-Glu epimerase (Thermotoga maritima (strain ATCC 43589 / DSM 3109 / JCM 10099 / NBRC 100826 / MSB8)).